The chain runs to 214 residues: 2-phospho-L-lactate guanylyltransferase (214 aa).

It belongs to the CofC family. As to quaternary structure, homodimer.

It catalyses the reaction (2S)-2-phospholactate + GTP + H(+) = (2S)-lactyl-2-diphospho-5'-guanosine + diphosphate. Its pathway is cofactor biosynthesis; coenzyme F420 biosynthesis. Functionally, guanylyltransferase that catalyzes the activation of (2S)-2-phospholactate (2-PL) as (2S)-lactyl-2-diphospho-5'-guanosine, via the condensation of 2-PL with GTP. It is involved in the biosynthesis of coenzyme F420, a hydride carrier cofactor. The polypeptide is 2-phospho-L-lactate guanylyltransferase (Methanoregula boonei (strain DSM 21154 / JCM 14090 / 6A8)).